A 49-amino-acid chain; its full sequence is Osteocalcin (49 aa).

The Gla domain occupies 1–47 (YLDHGLGAPAPYVDPLEPKREVCELNPDCDELADQMGFQEAYRRFYG). Proline 9 is modified (4-hydroxyproline). Ca(2+)-binding residues include glutamate 17, glutamate 21, glutamate 24, and aspartate 30. 3 positions are modified to 4-carboxyglutamate: glutamate 17, glutamate 21, and glutamate 24. An intrachain disulfide couples cysteine 23 to cysteine 29.

It belongs to the osteocalcin/matrix Gla protein family. Gamma-carboxyglutamic acid residues are formed by vitamin K dependent carboxylation. These residues are essential for the binding of calcium.

It is found in the secreted. Functionally, the carboxylated form is one of the main organic components of the bone matrix, which constitutes 1-2% of the total bone protein: it acts as a negative regulator of bone formation and is required to limit bone formation without impairing bone resorption or mineralization. The carboxylated form binds strongly to apatite and calcium. The uncarboxylated form acts as a hormone secreted by osteoblasts, which regulates different cellular processes, such as energy metabolism, male fertility and brain development. Regulates of energy metabolism by acting as a hormone favoring pancreatic beta-cell proliferation, insulin secretion and sensitivity and energy expenditure. Uncarboxylated osteocalcin hormone also promotes testosterone production in the testes: acts as a ligand for G protein-coupled receptor GPRC6A at the surface of Leydig cells, initiating a signaling response that promotes the expression of enzymes required for testosterone synthesis in a CREB-dependent manner. Also acts as a regulator of brain development: osteocalcin hormone crosses the blood-brain barrier and acts as a ligand for GPR158 on neurons, initiating a signaling response that prevents neuronal apoptosis in the hippocampus, favors the synthesis of all monoamine neurotransmitters and inhibits that of gamma-aminobutyric acid (GABA). Osteocalcin also crosses the placenta during pregnancy and maternal osteocalcin is required for fetal brain development. In Lama guanicoe (Guanaco), this protein is Osteocalcin.